An 841-amino-acid chain; its full sequence is DNA ligase (841 aa).

NAD(+) contacts are provided by residues 54 to 58, 103 to 104, and glutamate 143; these read DAEYD and SL. Residue lysine 145 is the N6-AMP-lysine intermediate of the active site. 4 residues coordinate NAD(+): arginine 166, glutamate 203, lysine 321, and lysine 345. Positions 471, 474, 489, and 495 each coordinate Zn(2+). Positions 554–575 are disordered; that stretch reads KTVAESDQMPSEGSSVGASGKH. Residues 561 to 570 are compositionally biased toward polar residues; that stretch reads QMPSEGSSVG. Residues 764–841 form the BRCT domain; that stretch reads GINKAVAGKT…SEAELLTLLG (78 aa).

Belongs to the NAD-dependent DNA ligase family. LigA subfamily. It depends on Mg(2+) as a cofactor. Mn(2+) serves as cofactor.

It carries out the reaction NAD(+) + (deoxyribonucleotide)n-3'-hydroxyl + 5'-phospho-(deoxyribonucleotide)m = (deoxyribonucleotide)n+m + AMP + beta-nicotinamide D-nucleotide.. DNA ligase that catalyzes the formation of phosphodiester linkages between 5'-phosphoryl and 3'-hydroxyl groups in double-stranded DNA using NAD as a coenzyme and as the energy source for the reaction. It is essential for DNA replication and repair of damaged DNA. The chain is DNA ligase from Neisseria meningitidis serogroup C / serotype 2a (strain ATCC 700532 / DSM 15464 / FAM18).